We begin with the raw amino-acid sequence, 691 residues long: Threonine--tRNA ligase (691 aa).

In terms of domain architecture, TGS spans 1–69; it reads MSTPEITPAA…QQDVEVAAVP (69 aa). Positions 268–574 are catalytic; sequence DHRRLGQELD…LLEHYAGAFP (307 aa). 3 residues coordinate Zn(2+): Cys373, His424, and His551.

Belongs to the class-II aminoacyl-tRNA synthetase family. As to quaternary structure, homodimer. Requires Zn(2+) as cofactor.

It localises to the cytoplasm. It carries out the reaction tRNA(Thr) + L-threonine + ATP = L-threonyl-tRNA(Thr) + AMP + diphosphate + H(+). Functionally, catalyzes the attachment of threonine to tRNA(Thr) in a two-step reaction: L-threonine is first activated by ATP to form Thr-AMP and then transferred to the acceptor end of tRNA(Thr). Also edits incorrectly charged L-seryl-tRNA(Thr). The polypeptide is Threonine--tRNA ligase (Corynebacterium jeikeium (strain K411)).